The following is a 398-amino-acid chain: S-adenosylmethionine synthase (398 aa).

H16 is a binding site for ATP. Mg(2+) is bound at residue D18. Residue E44 participates in K(+) binding. The L-methionine site is built by E57 and Q100. The segment at 100–110 (QSPDIAQGVNE) is flexible loop. ATP-binding positions include 175–177 (DAK), 242–243 (RF), D251, 257–258 (RK), A274, and K278. Position 251 (D251) interacts with L-methionine. K282 lines the L-methionine pocket.

The protein belongs to the AdoMet synthase family. In terms of assembly, homotetramer; dimer of dimers. The cofactor is Mg(2+). Requires K(+) as cofactor.

Its subcellular location is the cytoplasm. It carries out the reaction L-methionine + ATP + H2O = S-adenosyl-L-methionine + phosphate + diphosphate. Its pathway is amino-acid biosynthesis; S-adenosyl-L-methionine biosynthesis; S-adenosyl-L-methionine from L-methionine: step 1/1. Its function is as follows. Catalyzes the formation of S-adenosylmethionine (AdoMet) from methionine and ATP. The overall synthetic reaction is composed of two sequential steps, AdoMet formation and the subsequent tripolyphosphate hydrolysis which occurs prior to release of AdoMet from the enzyme. In Streptococcus agalactiae serotype Ia (strain ATCC 27591 / A909 / CDC SS700), this protein is S-adenosylmethionine synthase.